A 276-amino-acid polypeptide reads, in one-letter code: Pyridinium-3,5-bisthiocarboxylic acid mononucleotide synthase (276 aa).

Cysteine 176 acts as the Nucleophile and sulfur donor in catalysis. 2,3-didehydroalanine (Cys) is present on cysteine 176.

The protein belongs to the LarE family.

The enzyme catalyses pyridinium-3,5-dicarboxylate mononucleotide + [LarE protein]-L-cysteine + ATP = [LarE protein]-dehydroalanine + pyridinium-3-carboxylate-5-thiocarboxylate mononucleotide + AMP + diphosphate + H(+). It catalyses the reaction [LarE protein]-L-cysteine + pyridinium-3-carboxylate-5-thiocarboxylate mononucleotide + ATP = pyridinium-3,5-bisthiocarboxylate mononucleotide + [LarE protein]-dehydroalanine + AMP + diphosphate + H(+). Involved in the biosynthesis of a nickel-pincer cofactor ((SCS)Ni(II) pincer complex). Catalyzes the ATP-dependent incorporation of two sulfur atoms in pyridinium-3,5-biscarboxylic acid mononucleotide (P2CMN) to yield pyridinium-3,5-bisthiocarboxylic acid mononucleotide (P2TMN). The source of sulfur is the enzyme itself: Cys-176 of LarE is the sulfur donor, thereby being converted into dehydroalanine, and is not regenerated in vivo. Thus, two molecules of LarE undergo sacrificial sulfur transfer to create one P2TMN. Binds nickel. Is required for the activation of the lactate racemase LarA. May also be involved in the activation of other nickel-pincer cofactor-dependent enzymes. The chain is Pyridinium-3,5-bisthiocarboxylic acid mononucleotide synthase from Lactiplantibacillus plantarum (strain ATCC BAA-793 / NCIMB 8826 / WCFS1) (Lactobacillus plantarum).